Reading from the N-terminus, the 886-residue chain is MGESDRFCYVYSCDLDISVRLKIGSLEGKREQKSYKAVLEDPMLKFSGLYQETCSDLYVTCQVFAEGKPLALPVRTSYKAFSTRWNWNEWLKLPVKYADLPRSAQVALTIWDVYGPGKAIPVGGATVSLFGKYGMFRQGMHDLKVWPNIEADGSELTKTPGRTNSSASEDQMSRLAKLTKAHRQGHMVKVDWLDRLTFREIEMINESEKRSSNFMYLMVEFPCVKCDEKEYGIVYYEKDGDESTPISTSSEIVRVPDPQMSMENLVEIKHHKLARSLRSGPSDHDLKPNAATRDQLNIIVSYPPTKQLTSEEQDLVWKFRSYLTSQEKALTKFLKCVNWDLPQEAKQALELLGKWKPMDVEDSLELLSSHFTNPTVRRYAVARLQQADDEDLLMYLLQLVQALKYENFEDIKSGLEPTKKDSQGPMLESMTTSGINPETDSSQILSNPLPAVSSPAPPSKTKDGLDAETLEQDLCTFLISRACKNSTLANYLYWYVIVECEDQDTQLRDPKTHEMYLNVMRRFSQALLKGDKSVRVMRSLLATQQTFVDRLVHLMKAVQRESGNRKKKNERLQALLGDNEKMNLSEFEPIPLPLEPQVKIRGIIPEKATLFKSALMPAKLYFKTEDGGKYPVIFKNGDDLRQDQLILQIISLMDKLLRKENLDLKLTPYKVLATSTKHGFMQFIQSVPVAEVLATEGSIQNFFRKYSPSEKGPYGISAEVMDTYVKSCAGYCVITYILGVGDRHLDNLLLTKTGKLFHIDFGYILGRDPKPLPPPMKLNKEMVEGMGGTQSEQYQAFRKQCYTAFLHLRRYSNLILNLFSLMVDANIPDIALEPDKTVKKVQDKFRLDLSDEEAVHYMQTLIDDSVNALFAAVVEQIHKFAQYWRR.

The C2 PI3K-type domain maps to 35 to 184 (YKAVLEDPML…LAKLTKAHRQ (150 aa)). Residues 283-519 (DHDLKPNAAT…PKTHEMYLNV (237 aa)) enclose the PIK helical domain. The segment at 414–464 (GLEPTKKDSQGPMLESMTTSGINPETDSSQILSNPLPAVSSPAPPSKTKDG) is disordered. Residues 429-444 (SMTTSGINPETDSSQI) are compositionally biased toward polar residues. Residues 445–454 (LSNPLPAVSS) show a composition bias toward low complexity. In terms of domain architecture, PI3K/PI4K catalytic spans 604-870 (IPEKATLFKS…LIDDSVNALF (267 aa)). The tract at residues 610–616 (LFKSALM) is G-loop. A catalytic loop region spans residues 739 to 747 (GVGDRHLDN). The interval 758–779 (HIDFGYILGRDPKPLPPPMKLN) is activation loop.

The protein belongs to the PI3/PI4-kinase family. As to quaternary structure, component of the PI3K (PI3KC3/PI3K-III/class III phosphatidylinositol 3-kinase) complex the core of which is composed of the catalytic subunit pik3c3, the regulatory subunit pik3r4 and becn1 associating with additional regulatory/auxiliary subunits to form alternative complex forms. It depends on Mn(2+) as a cofactor.

It is found in the midbody. The catalysed reaction is a 1,2-diacyl-sn-glycero-3-phospho-(1D-myo-inositol) + ATP = a 1,2-diacyl-sn-glycero-3-phospho-(1D-myo-inositol-3-phosphate) + ADP + H(+). Functionally, catalytic subunit of the PI3K complex that mediates formation of phosphatidylinositol 3-phosphate; different complex forms are believed to play a role in multiple membrane trafficking pathways. Involved in the transport of lysosomal enzyme precursors to lysosomes. Required for transport from early to late endosomes. In Xenopus laevis (African clawed frog), this protein is Phosphatidylinositol 3-kinase catalytic subunit type 3 (pik3c3).